We begin with the raw amino-acid sequence, 418 residues long: Serine protease inhibitor A3M (418 aa).

Positions 1–20 (MAFIAALGILMAGICPTVLC) are cleaved as a signal peptide. Residues Asn104, Asn184, and Asn269 are each glycosylated (N-linked (GlcNAc...) asparagine). Positions 367 to 392 (GTEAAAATGFIFGFRSRRLQTMTVQF) are RCL.

Belongs to the serpin family. As to expression, expressed in liver and testis.

It is found in the secreted. This chain is Serine protease inhibitor A3M (Serpina3m), found in Mus musculus (Mouse).